Here is a 149-residue protein sequence, read N- to C-terminus: Prefoldin subunit alpha (149 aa).

This sequence belongs to the prefoldin alpha subunit family. As to quaternary structure, heterohexamer of two alpha and four beta subunits.

Its subcellular location is the cytoplasm. In terms of biological role, molecular chaperone capable of stabilizing a range of proteins. Seems to fulfill an ATP-independent, HSP70-like function in archaeal de novo protein folding. The sequence is that of Prefoldin subunit alpha from Methanoculleus marisnigri (strain ATCC 35101 / DSM 1498 / JR1).